The primary structure comprises 285 residues: Acetyl-coenzyme A carboxylase carboxyl transferase subunit beta (285 aa).

In terms of domain architecture, CoA carboxyltransferase N-terminal spans 33–285 (MWIKCSKCGK…TLGNILRMHS (253 aa)). Zn(2+) contacts are provided by Cys37, Cys40, Cys56, and Cys59. A C4-type zinc finger spans residues 37-59 (CSKCGKILYKSDVDDNFKVCPKC).

Belongs to the AccD/PCCB family. Acetyl-CoA carboxylase is a heterohexamer composed of biotin carboxyl carrier protein (AccB), biotin carboxylase (AccC) and two subunits each of ACCase subunit alpha (AccA) and ACCase subunit beta (AccD). The cofactor is Zn(2+).

The protein resides in the cytoplasm. It catalyses the reaction N(6)-carboxybiotinyl-L-lysyl-[protein] + acetyl-CoA = N(6)-biotinyl-L-lysyl-[protein] + malonyl-CoA. Its pathway is lipid metabolism; malonyl-CoA biosynthesis; malonyl-CoA from acetyl-CoA: step 1/1. Its function is as follows. Component of the acetyl coenzyme A carboxylase (ACC) complex. Biotin carboxylase (BC) catalyzes the carboxylation of biotin on its carrier protein (BCCP) and then the CO(2) group is transferred by the transcarboxylase to acetyl-CoA to form malonyl-CoA. The protein is Acetyl-coenzyme A carboxylase carboxyl transferase subunit beta of Clostridium acetobutylicum (strain ATCC 824 / DSM 792 / JCM 1419 / IAM 19013 / LMG 5710 / NBRC 13948 / NRRL B-527 / VKM B-1787 / 2291 / W).